Here is a 315-residue protein sequence, read N- to C-terminus: Methionyl-tRNA formyltransferase (315 aa).

113 to 116 is a (6S)-5,6,7,8-tetrahydrofolate binding site; that stretch reads SLLP.

Belongs to the Fmt family.

It carries out the reaction L-methionyl-tRNA(fMet) + (6R)-10-formyltetrahydrofolate = N-formyl-L-methionyl-tRNA(fMet) + (6S)-5,6,7,8-tetrahydrofolate + H(+). Its function is as follows. Attaches a formyl group to the free amino group of methionyl-tRNA(fMet). The formyl group appears to play a dual role in the initiator identity of N-formylmethionyl-tRNA by promoting its recognition by IF2 and preventing the misappropriation of this tRNA by the elongation apparatus. The protein is Methionyl-tRNA formyltransferase of Klebsiella pneumoniae subsp. pneumoniae (strain ATCC 700721 / MGH 78578).